A 146-amino-acid polypeptide reads, in one-letter code: VHLTPDEKNAVTALWGKVNVDEVGGEALGRLLVVYPWTQRFFDSFGDLSTADAVMGNPKVKAHGKKVLGAFSDGLAHLDNLKGTFAQLSELHCDKLHVDPENFKLLGNVLVCVLAHHFGKEFTPQVQAAYQKVVAGVANALAHKYH.

An N-acetylvaline modification is found at valine 1. Residues 2–146 (HLTPDEKNAV…VANALAHKYH (145 aa)) enclose the Globin domain. A Phosphothreonine modification is found at threonine 12. At serine 44 the chain carries Phosphoserine. N6-acetyllysine is present on lysine 59. Histidine 63 is a binding site for heme b. The residue at position 82 (lysine 82) is an N6-acetyllysine. Histidine 92 contacts heme b. Cysteine 93 carries the S-nitrosocysteine modification. The residue at position 144 (lysine 144) is an N6-acetyllysine.

This sequence belongs to the globin family. In terms of assembly, heterotetramer of two alpha chains and two beta chains. In terms of tissue distribution, red blood cells.

In terms of biological role, involved in oxygen transport from the lung to the various peripheral tissues. This is Hemoglobin subunit beta (HBB) from Piliocolobus badius (Western red colobus).